Reading from the N-terminus, the 29-residue chain is GLPICGETCFTGTCYTPGCTCSYPVCKKN.

The segment at residues 1 to 29 (GLPICGETCFTGTCYTPGCTCSYPVCKKN) is a cross-link (cyclopeptide (Gly-Asn)). 3 disulfide bridges follow: C5–C19, C9–C21, and C14–C26.

In terms of processing, contains 3 disulfide bonds. Post-translationally, this is a cyclic peptide. In terms of tissue distribution, expressed in root nodules but not in seed.

Functionally, probably participates in a plant defense mechanism. This Clitoria ternatea (Butterfly pea) protein is Cliotide T18.